The chain runs to 89 residues: Small ribosomal subunit protein uS15 (89 aa).

The protein belongs to the universal ribosomal protein uS15 family. Part of the 30S ribosomal subunit. Forms a bridge to the 50S subunit in the 70S ribosome, contacting the 23S rRNA.

In terms of biological role, one of the primary rRNA binding proteins, it binds directly to 16S rRNA where it helps nucleate assembly of the platform of the 30S subunit by binding and bridging several RNA helices of the 16S rRNA. Functionally, forms an intersubunit bridge (bridge B4) with the 23S rRNA of the 50S subunit in the ribosome. In Bdellovibrio bacteriovorus (strain ATCC 15356 / DSM 50701 / NCIMB 9529 / HD100), this protein is Small ribosomal subunit protein uS15.